The sequence spans 300 residues: NAD kinase (300 aa).

Catalysis depends on Asp-78, which acts as the Proton acceptor. Residues Asp-78–Gly-79, Asn-152–Asp-153, His-163, Arg-180, Asp-182, and Thr-193–Ser-198 each bind NAD(+).

It belongs to the NAD kinase family. A divalent metal cation serves as cofactor.

The protein resides in the cytoplasm. It catalyses the reaction NAD(+) + ATP = ADP + NADP(+) + H(+). Its function is as follows. Involved in the regulation of the intracellular balance of NAD and NADP, and is a key enzyme in the biosynthesis of NADP. Catalyzes specifically the phosphorylation on 2'-hydroxyl of the adenosine moiety of NAD to yield NADP. This Alcanivorax borkumensis (strain ATCC 700651 / DSM 11573 / NCIMB 13689 / SK2) protein is NAD kinase.